A 256-amino-acid polypeptide reads, in one-letter code: Hydroxyacylglutathione hydrolase (256 aa).

Zn(2+) contacts are provided by histidine 57, histidine 59, aspartate 61, histidine 62, histidine 115, aspartate 134, and histidine 172.

The protein belongs to the metallo-beta-lactamase superfamily. Glyoxalase II family. Monomer. Zn(2+) is required as a cofactor.

It carries out the reaction an S-(2-hydroxyacyl)glutathione + H2O = a 2-hydroxy carboxylate + glutathione + H(+). Its pathway is secondary metabolite metabolism; methylglyoxal degradation; (R)-lactate from methylglyoxal: step 2/2. In terms of biological role, thiolesterase that catalyzes the hydrolysis of S-D-lactoyl-glutathione to form glutathione and D-lactic acid. In Rhizobium meliloti (strain 1021) (Ensifer meliloti), this protein is Hydroxyacylglutathione hydrolase.